We begin with the raw amino-acid sequence, 353 residues long: Rhodopsin (353 aa).

At Met-1–Ala-36 the chain is on the extracellular side. Residues Asn-2 and Asn-15 are each glycosylated (N-linked (GlcNAc...) asparagine). Residues Tyr-37–Val-61 traverse the membrane as a helical segment. The Cytoplasmic segment spans residues Thr-62–Asn-73. Residues Tyr-74–Tyr-96 traverse the membrane as a helical segment. Residues Thr-97–Cys-110 are Extracellular-facing. Cys-110 and Cys-187 are disulfide-bonded. A helical transmembrane segment spans residues Asn-111 to Val-133. A 'Ionic lock' involved in activated form stabilization motif is present at residues Glu-134–Trp-136. Topologically, residues Glu-134–His-152 are cytoplasmic. The helical transmembrane segment at Ala-153 to Val-173 threads the bilayer. At Gly-174–Ser-202 the chain is on the extracellular side. Residue Asn-200 is glycosylated (N-linked (GlcNAc...) asparagine). A helical membrane pass occupies residues Phe-203–Gly-224. The Cytoplasmic segment spans residues Arg-225–Arg-252. The helical transmembrane segment at Met-253–Tyr-274 threads the bilayer. Topologically, residues Ile-275–Leu-286 are extracellular. The helical transmembrane segment at Phe-287–Phe-308 threads the bilayer. An N6-(retinylidene)lysine modification is found at Lys-296. Residues Met-309–Ala-353 lie on the Cytoplasmic side of the membrane. S-palmitoyl cysteine attachment occurs at residues Cys-322 and Cys-323. Residues Glu-329 to Ala-353 are disordered. Positions Ser-334 to Ala-353 are enriched in low complexity.

Belongs to the G-protein coupled receptor 1 family. Opsin subfamily. Post-translationally, phosphorylated on some or all of the serine and threonine residues present in the C-terminal region. Contains one covalently linked retinal chromophore.

It is found in the membrane. Its subcellular location is the cell projection. It localises to the cilium. The protein localises to the photoreceptor outer segment. Functionally, photoreceptor required for image-forming vision at low light intensity. While most salt water fish species use retinal as chromophore, most freshwater fish use 3-dehydroretinal, or a mixture of retinal and 3-dehydroretinal. Light-induced isomerization of 11-cis to all-trans retinal triggers a conformational change that activates signaling via G-proteins. Subsequent receptor phosphorylation mediates displacement of the bound G-protein alpha subunit by arrestin and terminates signaling. In Solea solea (Common sole), this protein is Rhodopsin (rho).